A 187-amino-acid polypeptide reads, in one-letter code: Peptidyl-tRNA hydrolase (187 aa).

Tyrosine 15 is a tRNA binding site. The active-site Proton acceptor is histidine 20. TRNA-binding residues include tyrosine 64, asparagine 66, and asparagine 112.

It belongs to the PTH family. In terms of assembly, monomer.

The protein localises to the cytoplasm. The enzyme catalyses an N-acyl-L-alpha-aminoacyl-tRNA + H2O = an N-acyl-L-amino acid + a tRNA + H(+). Hydrolyzes ribosome-free peptidyl-tRNAs (with 1 or more amino acids incorporated), which drop off the ribosome during protein synthesis, or as a result of ribosome stalling. In terms of biological role, catalyzes the release of premature peptidyl moieties from peptidyl-tRNA molecules trapped in stalled 50S ribosomal subunits, and thus maintains levels of free tRNAs and 50S ribosomes. In Phocaeicola vulgatus (strain ATCC 8482 / DSM 1447 / JCM 5826 / CCUG 4940 / NBRC 14291 / NCTC 11154) (Bacteroides vulgatus), this protein is Peptidyl-tRNA hydrolase.